The sequence spans 289 residues: NAD kinase (289 aa).

Residue Asp68 is the Proton acceptor of the active site. NAD(+)-binding positions include 68-69, Lys73, 142-143, Arg153, Asp172, 183-188, and Gln243; these read DG, ND, and TAYSLS.

This sequence belongs to the NAD kinase family. It depends on a divalent metal cation as a cofactor.

It is found in the cytoplasm. The enzyme catalyses NAD(+) + ATP = ADP + NADP(+) + H(+). Its function is as follows. Involved in the regulation of the intracellular balance of NAD and NADP, and is a key enzyme in the biosynthesis of NADP. Catalyzes specifically the phosphorylation on 2'-hydroxyl of the adenosine moiety of NAD to yield NADP. This chain is NAD kinase, found in Acetivibrio thermocellus (strain ATCC 27405 / DSM 1237 / JCM 9322 / NBRC 103400 / NCIMB 10682 / NRRL B-4536 / VPI 7372) (Clostridium thermocellum).